The primary structure comprises 384 residues: Mitogen-activated protein kinase 8 (384 aa).

Residues 26-321 enclose the Protein kinase domain; sequence YQNLRPIGSG…VDEALQHPYI (296 aa). ATP contacts are provided by residues 33–38 and K55; that span reads GSGAQG. Catalysis depends on D151, which acts as the Proton acceptor. Residue T183 is modified to Phosphothreonine. Positions 183 to 185 match the TXY motif; sequence TPY. At Y185 the chain carries Phosphotyrosine.

The protein belongs to the protein kinase superfamily. CMGC Ser/Thr protein kinase family. MAP kinase subfamily. The cofactor is Mg(2+). Post-translationally, dually phosphorylated on Thr-183 and Tyr-185, which activates the enzyme.

Its subcellular location is the cytoplasm. It localises to the nucleus. The protein localises to the synapse. The enzyme catalyses L-seryl-[protein] + ATP = O-phospho-L-seryl-[protein] + ADP + H(+). It catalyses the reaction L-threonyl-[protein] + ATP = O-phospho-L-threonyl-[protein] + ADP + H(+). With respect to regulation, activated by threonine and tyrosine phosphorylation. In terms of biological role, responds to activation by environmental stress and pro-inflammatory cytokines by phosphorylating a number of transcription factors, primarily components of AP-1 such as c-Jun and ATF2 and thus regulates AP-1 transcriptional activity. May play a role in the regulation of the circadian clock. This is Mitogen-activated protein kinase 8 (mapk8) from Danio rerio (Zebrafish).